The primary structure comprises 251 residues: Pyrroloquinoline-quinone synthase (251 aa).

This sequence belongs to the PqqC family.

The enzyme catalyses 6-(2-amino-2-carboxyethyl)-7,8-dioxo-1,2,3,4,7,8-hexahydroquinoline-2,4-dicarboxylate + 3 O2 = pyrroloquinoline quinone + 2 H2O2 + 2 H2O + H(+). Its pathway is cofactor biosynthesis; pyrroloquinoline quinone biosynthesis. In terms of biological role, ring cyclization and eight-electron oxidation of 3a-(2-amino-2-carboxyethyl)-4,5-dioxo-4,5,6,7,8,9-hexahydroquinoline-7,9-dicarboxylic-acid to PQQ. The sequence is that of Pyrroloquinoline-quinone synthase from Pseudomonas entomophila (strain L48).